Here is a 306-residue protein sequence, read N- to C-terminus: Palmitoyl-protein thioesterase ABHD10, mitochondrial (306 aa).

A mitochondrion-targeting transit peptide spans 1–52 (MAVARLAAVAAWVPCRSWGCAAVPFGPHRGLSALLARIPQRAPRWLPACRQK). One can recognise an AB hydrolase-1 domain in the interval 78–177 (IIFIPGYLSY…KVVALLGVAT (100 aa)). Residues serine 152, aspartate 249, and histidine 279 each act as charge relay system in the active site.

This sequence belongs to the AB hydrolase superfamily.

The protein localises to the mitochondrion. It carries out the reaction S-hexadecanoyl-L-cysteinyl-[protein] + H2O = L-cysteinyl-[protein] + hexadecanoate + H(+). The catalysed reaction is mycophenolic acid O-acyl-beta-D-glucuronide + H2O = mycophenolate + D-glucuronate + H(+). Its activity is regulated as follows. Inhibited by palmostatin-B. Acts as an acyl-protein thioesterase that hydrolyzes fatty acids from acylated residues in proteins. Regulates the mitochondrial S-depalmitoylation of the nucleophilic active site residue of peroxiredoxin-5/PRDX5, a key antioxidant protein, therefore modulating mitochondrial antioxidant ability. Also catalyzes the deglucuronidation of mycophenolic acid acyl-glucuronide, an active metabolite of the immunosuppressant drug mycophenolate. The sequence is that of Palmitoyl-protein thioesterase ABHD10, mitochondrial (ABHD10) from Pongo abelii (Sumatran orangutan).